The chain runs to 159 residues: Transcriptional repressor NrdR (159 aa).

Residues 3-34 (CPTCQNTDSRVLESRSADTGKSVRRRRECLNC) fold into a zinc finger. The ATP-cone domain maps to 49 to 139 (ISVIKKDGSR…VYRKFNGVKD (91 aa)).

It belongs to the NrdR family. The cofactor is Zn(2+).

Functionally, negatively regulates transcription of bacterial ribonucleotide reductase nrd genes and operons by binding to NrdR-boxes. In Prochlorococcus marinus subsp. pastoris (strain CCMP1986 / NIES-2087 / MED4), this protein is Transcriptional repressor NrdR.